The sequence spans 318 residues: Methionyl-tRNA formyltransferase (318 aa).

112-115 (SILP) contacts (6S)-5,6,7,8-tetrahydrofolate.

The protein belongs to the Fmt family.

It catalyses the reaction L-methionyl-tRNA(fMet) + (6R)-10-formyltetrahydrofolate = N-formyl-L-methionyl-tRNA(fMet) + (6S)-5,6,7,8-tetrahydrofolate + H(+). Functionally, attaches a formyl group to the free amino group of methionyl-tRNA(fMet). The formyl group appears to play a dual role in the initiator identity of N-formylmethionyl-tRNA by promoting its recognition by IF2 and preventing the misappropriation of this tRNA by the elongation apparatus. The polypeptide is Methionyl-tRNA formyltransferase (Shewanella frigidimarina (strain NCIMB 400)).